Consider the following 227-residue polypeptide: Phosphatidylserine decarboxylase proenzyme (227 aa).

Ser-184 serves as the catalytic Schiff-base intermediate with substrate; via pyruvic acid. Ser-184 carries the post-translational modification Pyruvic acid (Ser); by autocatalysis.

The protein belongs to the phosphatidylserine decarboxylase family. PSD-A subfamily. In terms of assembly, heterodimer of a large membrane-associated beta subunit and a small pyruvoyl-containing alpha subunit. The cofactor is pyruvate. Is synthesized initially as an inactive proenzyme. Formation of the active enzyme involves a self-maturation process in which the active site pyruvoyl group is generated from an internal serine residue via an autocatalytic post-translational modification. Two non-identical subunits are generated from the proenzyme in this reaction, and the pyruvate is formed at the N-terminus of the alpha chain, which is derived from the carboxyl end of the proenzyme. The post-translation cleavage follows an unusual pathway, termed non-hydrolytic serinolysis, in which the side chain hydroxyl group of the serine supplies its oxygen atom to form the C-terminus of the beta chain, while the remainder of the serine residue undergoes an oxidative deamination to produce ammonia and the pyruvoyl prosthetic group on the alpha chain.

The protein resides in the cell membrane. The catalysed reaction is a 1,2-diacyl-sn-glycero-3-phospho-L-serine + H(+) = a 1,2-diacyl-sn-glycero-3-phosphoethanolamine + CO2. The protein operates within phospholipid metabolism; phosphatidylethanolamine biosynthesis; phosphatidylethanolamine from CDP-diacylglycerol: step 2/2. Functionally, catalyzes the formation of phosphatidylethanolamine (PtdEtn) from phosphatidylserine (PtdSer). This is Phosphatidylserine decarboxylase proenzyme from Ehrlichia ruminantium (strain Gardel).